The chain runs to 342 residues: BAG family molecular chaperone regulator 1 (342 aa).

The interval 1–41 is disordered; the sequence is MMKMMRNKPTNLPTAGMTNGGRGSGGGGGGGGRESGGRDLE. Residues 8 to 17 are compositionally biased toward polar residues; sequence KPTNLPTAGM. The span at 18–34 shows a compositional bias: gly residues; it reads TNGGRGSGGGGGGGGRE. The 77-residue stretch at 65–141 folds into the Ubiquitin-like domain; sequence PMIRVRIKYG…MVLIEDPLSQ (77 aa). The BAG domain maps to 160–238; the sequence is AISDISLEVD…NYVETLDALK (79 aa). Ser298 is modified (phosphoserine).

As to quaternary structure, binds to the ATPase domain of HSP70/HSC70 chaperones.

Its function is as follows. Co-chaperone that regulates diverse cellular pathways, such as programmed cell death and stress responses. The sequence is that of BAG family molecular chaperone regulator 1 (BAG1) from Arabidopsis thaliana (Mouse-ear cress).